Reading from the N-terminus, the 128-residue chain is Large ribosomal subunit protein bL12 (128 aa).

It belongs to the bacterial ribosomal protein bL12 family. In terms of assembly, homodimer. Part of the ribosomal stalk of the 50S ribosomal subunit. Forms a multimeric L10(L12)X complex, where L10 forms an elongated spine to which 2 to 4 L12 dimers bind in a sequential fashion. Binds GTP-bound translation factors.

Forms part of the ribosomal stalk which helps the ribosome interact with GTP-bound translation factors. Is thus essential for accurate translation. This is Large ribosomal subunit protein bL12 from Corynebacterium aurimucosum (strain ATCC 700975 / DSM 44827 / CIP 107346 / CN-1) (Corynebacterium nigricans).